The primary structure comprises 529 residues: UDP-glucuronosyltransferase 2B18 (529 aa).

The first 21 residues, 1 to 21 (MSVKWTSVILLIQLSFYFSSG), serve as a signal peptide directing secretion. Residues Asn-67 and Asn-68 are each glycosylated (N-linked (GlcNAc...) asparagine). A helical membrane pass occupies residues 493-513 (VIGFLLACVATVIFIIMKCCL).

The protein belongs to the UDP-glycosyltransferase family. In terms of tissue distribution, expressed in liver, prostate, kidney, testis, adrenal, bile duct, bladder, colon, small intestine, cerebellum and pancreas.

The protein resides in the microsome membrane. The protein localises to the endoplasmic reticulum membrane. It catalyses the reaction glucuronate acceptor + UDP-alpha-D-glucuronate = acceptor beta-D-glucuronoside + UDP + H(+). Its function is as follows. UDPGT is of major importance in the conjugation and subsequent elimination of potentially toxic xenobiotics and endogenous compounds. This isozyme displays activity toward 3-hydroxyandrogens. It is principally active on C19 steroids having a hydroxyl group at position 3-alpha of the steroid molecule and also active on planar phenols and bile acids. The sequence is that of UDP-glucuronosyltransferase 2B18 (UGT2B18) from Macaca fascicularis (Crab-eating macaque).